The following is a 454-amino-acid chain: Asparagine--tRNA ligase (454 aa).

The protein belongs to the class-II aminoacyl-tRNA synthetase family. As to quaternary structure, homodimer.

The protein localises to the cytoplasm. The catalysed reaction is tRNA(Asn) + L-asparagine + ATP = L-asparaginyl-tRNA(Asn) + AMP + diphosphate + H(+). This is Asparagine--tRNA ligase from Mesoplasma florum (strain ATCC 33453 / NBRC 100688 / NCTC 11704 / L1) (Acholeplasma florum).